The chain runs to 148 residues: Small ribosomal subunit protein eS6 (148 aa).

This sequence belongs to the eukaryotic ribosomal protein eS6 family.

The sequence is that of Small ribosomal subunit protein eS6 from Pyrobaculum arsenaticum (strain DSM 13514 / JCM 11321 / PZ6).